The sequence spans 599 residues: Elongation factor 4 (599 aa).

One can recognise a tr-type G domain in the interval 2–184 (KNIRNFSIIA…RLVRDIPPPQ (183 aa)). GTP contacts are provided by residues 14 to 19 (DHGKST) and 131 to 134 (NKID).

This sequence belongs to the TRAFAC class translation factor GTPase superfamily. Classic translation factor GTPase family. LepA subfamily.

Its subcellular location is the cell inner membrane. It catalyses the reaction GTP + H2O = GDP + phosphate + H(+). Its function is as follows. Required for accurate and efficient protein synthesis under certain stress conditions. May act as a fidelity factor of the translation reaction, by catalyzing a one-codon backward translocation of tRNAs on improperly translocated ribosomes. Back-translocation proceeds from a post-translocation (POST) complex to a pre-translocation (PRE) complex, thus giving elongation factor G a second chance to translocate the tRNAs correctly. Binds to ribosomes in a GTP-dependent manner. The polypeptide is Elongation factor 4 (Salmonella gallinarum (strain 287/91 / NCTC 13346)).